Here is a 539-residue protein sequence, read N- to C-terminus: Propionyl-CoA carboxylase beta chain, mitochondrial (539 aa).

Residues 1 to 28 constitute a mitochondrion transit peptide; the sequence is MAAAVRVTAARARLRVVVRSLHAGVRSL. Residues 32 to 290 enclose the CoA carboxyltransferase N-terminal domain; sequence PVSVNERIEN…SNQDPAPIRE (259 aa). Residues 32–533 are carboxyltransferase; it reads PVSVNERIEN…SKKVQRPWRK (502 aa). S71 is modified (phosphoserine). K99 is subject to N6-acetyllysine; alternate. Residue K99 is modified to N6-succinyllysine; alternate. Residues 294–533 form the CoA carboxyltransferase C-terminal domain; that stretch reads PSDRLVPELD…SKKVQRPWRK (240 aa). Residues 325-358 form an acyl-CoA binding region; it reads DERDFFEIMPNYAKNIIVGFARMNGRTVGIVGNQ. An N6-acetyllysine; alternate mark is found at K474 and K489. 2 positions are modified to N6-succinyllysine; alternate: K474 and K489.

The protein belongs to the AccD/PCCB family. In terms of assembly, the holoenzyme is a dodecamer composed of 6 PCCA/alpha subunits and 6 PCCB/beta subunits.

The protein localises to the mitochondrion matrix. It catalyses the reaction propanoyl-CoA + hydrogencarbonate + ATP = (S)-methylmalonyl-CoA + ADP + phosphate + H(+). It carries out the reaction butanoyl-CoA + hydrogencarbonate + ATP = (2S)-ethylmalonyl-CoA + ADP + phosphate + H(+). It participates in metabolic intermediate metabolism; propanoyl-CoA degradation; succinyl-CoA from propanoyl-CoA: step 1/3. In terms of biological role, this is one of the 2 subunits of the biotin-dependent propionyl-CoA carboxylase (PCC), a mitochondrial enzyme involved in the catabolism of odd chain fatty acids, branched-chain amino acids isoleucine, threonine, methionine, and valine and other metabolites. Propionyl-CoA carboxylase catalyzes the carboxylation of propionyl-CoA/propanoyl-CoA to D-methylmalonyl-CoA/(S)-methylmalonyl-CoA. Within the holoenzyme, the alpha subunit catalyzes the ATP-dependent carboxylation of the biotin carried by the biotin carboxyl carrier (BCC) domain, while the beta subunit then transfers the carboxyl group from carboxylated biotin to propionyl-CoA. Propionyl-CoA carboxylase also significantly acts on butyryl-CoA/butanoyl-CoA, which is converted to ethylmalonyl-CoA/(2S)-ethylmalonyl-CoA at a much lower rate. Other alternative minor substrates include (2E)-butenoyl-CoA/crotonoyl-CoA. The polypeptide is Propionyl-CoA carboxylase beta chain, mitochondrial (Sus scrofa (Pig)).